Here is a 363-residue protein sequence, read N- to C-terminus: Protein-glutamate methylesterase/protein-glutamine glutaminase 3 (363 aa).

The Response regulatory domain maps to 8-125; the sequence is KVLCVDDSAL…RDGMLDYAEK (118 aa). Residue Asp59 is modified to 4-aspartylphosphate. Residues 164–356 enclose the CheB-type methylesterase domain; it reads LVSTEKLIII…RRVMARLATM (193 aa). Residues Ser176, His202, and Asp298 contribute to the active site.

It belongs to the CheB family. Post-translationally, phosphorylated by CheA. Phosphorylation of the N-terminal regulatory domain activates the methylesterase activity.

It is found in the cytoplasm. It carries out the reaction [protein]-L-glutamate 5-O-methyl ester + H2O = L-glutamyl-[protein] + methanol + H(+). The enzyme catalyses L-glutaminyl-[protein] + H2O = L-glutamyl-[protein] + NH4(+). In terms of biological role, involved in chemotaxis. Part of a chemotaxis signal transduction system that modulates chemotaxis in response to various stimuli. Catalyzes the demethylation of specific methylglutamate residues introduced into the chemoreceptors (methyl-accepting chemotaxis proteins or MCP) by CheR. Also mediates the irreversible deamidation of specific glutamine residues to glutamic acid. In Burkholderia lata (strain ATCC 17760 / DSM 23089 / LMG 22485 / NCIMB 9086 / R18194 / 383), this protein is Protein-glutamate methylesterase/protein-glutamine glutaminase 3.